The primary structure comprises 398 residues: 4-hydroxy-3-methylbut-2-enyl diphosphate reductase (398 aa).

Cys66 contributes to the [4Fe-4S] cluster binding site. His96 contacts (2E)-4-hydroxy-3-methylbut-2-enyl diphosphate. His96 lines the dimethylallyl diphosphate pocket. His96 contacts isopentenyl diphosphate. Cys157 provides a ligand contact to [4Fe-4S] cluster. His185 contributes to the (2E)-4-hydroxy-3-methylbut-2-enyl diphosphate binding site. His185 provides a ligand contact to dimethylallyl diphosphate. Position 185 (His185) interacts with isopentenyl diphosphate. Glu187 (proton donor) is an active-site residue. Thr250 serves as a coordination point for (2E)-4-hydroxy-3-methylbut-2-enyl diphosphate. Cys288 serves as a coordination point for [4Fe-4S] cluster. Residues Ser317, Ser318, Asn319, and Ser380 each coordinate (2E)-4-hydroxy-3-methylbut-2-enyl diphosphate. Residues Ser317, Ser318, Asn319, and Ser380 each contribute to the dimethylallyl diphosphate site. Positions 317, 318, 319, and 380 each coordinate isopentenyl diphosphate.

The protein belongs to the IspH family. [4Fe-4S] cluster serves as cofactor.

The catalysed reaction is isopentenyl diphosphate + 2 oxidized [2Fe-2S]-[ferredoxin] + H2O = (2E)-4-hydroxy-3-methylbut-2-enyl diphosphate + 2 reduced [2Fe-2S]-[ferredoxin] + 2 H(+). It carries out the reaction dimethylallyl diphosphate + 2 oxidized [2Fe-2S]-[ferredoxin] + H2O = (2E)-4-hydroxy-3-methylbut-2-enyl diphosphate + 2 reduced [2Fe-2S]-[ferredoxin] + 2 H(+). The protein operates within isoprenoid biosynthesis; dimethylallyl diphosphate biosynthesis; dimethylallyl diphosphate from (2E)-4-hydroxy-3-methylbutenyl diphosphate: step 1/1. It functions in the pathway isoprenoid biosynthesis; isopentenyl diphosphate biosynthesis via DXP pathway; isopentenyl diphosphate from 1-deoxy-D-xylulose 5-phosphate: step 6/6. Catalyzes the conversion of 1-hydroxy-2-methyl-2-(E)-butenyl 4-diphosphate (HMBPP) into a mixture of isopentenyl diphosphate (IPP) and dimethylallyl diphosphate (DMAPP). Acts in the terminal step of the DOXP/MEP pathway for isoprenoid precursor biosynthesis. The polypeptide is 4-hydroxy-3-methylbut-2-enyl diphosphate reductase (Prochlorococcus marinus (strain MIT 9301)).